A 352-amino-acid polypeptide reads, in one-letter code: MPFSLVRIDEDDVLEYVFERYTAINSDADSIRQDLGIQDSKSTTLNIEIAPPKSLINDTNITKKGKKKKGNKSSSDYDFYSFEIKQNVTSLHSTRDNDNSTTGYVLWSLTPVFCEWLLYNEQASPLHRAQMVNICSLEKKIIHDIEFPSLLNEDTTVIELGSGISSVLPILCSNFVGTYICTDQRGILNGLKQNIANNLDLVNKRTIVSETLDISNIQEQPTNSDDETIPIKPTTQLEVAILDWETFPKSIKSGSSNILTDFVKPHGTIFLLALDVIYNEYLINPFLHTLHSIMFYYKNQREIVALVGIHLRSDDIVQEFLEKVTTEFPFKLHVVDDPQWSHSRYDIYYITL.

Residues W107, 161–163 (GSG), D183, W244, and L274 each bind S-adenosyl-L-methionine.

It belongs to the class I-like SAM-binding methyltransferase superfamily. RKM5 family.

In terms of biological role, S-adenosyl-L-methionine-dependent protein-lysine N-methyltransferase that methylates 60S ribosomal protein L1. This Candida glabrata (strain ATCC 2001 / BCRC 20586 / JCM 3761 / NBRC 0622 / NRRL Y-65 / CBS 138) (Yeast) protein is Ribosomal lysine N-methyltransferase 5 (RKM5).